A 231-amino-acid polypeptide reads, in one-letter code: Enolase-phosphatase E1 (231 aa).

Mg(2+) is bound by residues aspartate 11 and glutamate 13. Substrate is bound by residues 125–126 (SS) and lysine 162. Aspartate 188 contributes to the Mg(2+) binding site.

It belongs to the HAD-like hydrolase superfamily. MasA/MtnC family. As to quaternary structure, monomer. It depends on Mg(2+) as a cofactor.

The protein resides in the cytoplasm. The protein localises to the nucleus. The enzyme catalyses 5-methylsulfanyl-2,3-dioxopentyl phosphate + H2O = 1,2-dihydroxy-5-(methylsulfanyl)pent-1-en-3-one + phosphate. It functions in the pathway amino-acid biosynthesis; L-methionine biosynthesis via salvage pathway; L-methionine from S-methyl-5-thio-alpha-D-ribose 1-phosphate: step 3/6. Its pathway is amino-acid biosynthesis; L-methionine biosynthesis via salvage pathway; L-methionine from S-methyl-5-thio-alpha-D-ribose 1-phosphate: step 4/6. Its function is as follows. Bifunctional enzyme that catalyzes the enolization of 2,3-diketo-5-methylthiopentyl-1-phosphate (DK-MTP-1-P) into the intermediate 2-hydroxy-3-keto-5-methylthiopentenyl-1-phosphate (HK-MTPenyl-1-P), which is then dephosphorylated to form the acireductone 1,2-dihydroxy-3-keto-5-methylthiopentene (DHK-MTPene). In Pyricularia oryzae (strain 70-15 / ATCC MYA-4617 / FGSC 8958) (Rice blast fungus), this protein is Enolase-phosphatase E1.